A 361-amino-acid polypeptide reads, in one-letter code: Phosphoserine aminotransferase (361 aa).

R43 is a binding site for L-glutamate. Pyridoxal 5'-phosphate is bound by residues 77 to 78, W103, T153, D173, and Q196; that span reads AS. The residue at position 197 (K197) is an N6-(pyridoxal phosphate)lysine. 238–239 is a pyridoxal 5'-phosphate binding site; sequence NT.

It belongs to the class-V pyridoxal-phosphate-dependent aminotransferase family. SerC subfamily. Homodimer. Pyridoxal 5'-phosphate serves as cofactor.

The protein resides in the cytoplasm. It carries out the reaction O-phospho-L-serine + 2-oxoglutarate = 3-phosphooxypyruvate + L-glutamate. It catalyses the reaction 4-(phosphooxy)-L-threonine + 2-oxoglutarate = (R)-3-hydroxy-2-oxo-4-phosphooxybutanoate + L-glutamate. It functions in the pathway amino-acid biosynthesis; L-serine biosynthesis; L-serine from 3-phospho-D-glycerate: step 2/3. It participates in cofactor biosynthesis; pyridoxine 5'-phosphate biosynthesis; pyridoxine 5'-phosphate from D-erythrose 4-phosphate: step 3/5. In terms of biological role, catalyzes the reversible conversion of 3-phosphohydroxypyruvate to phosphoserine and of 3-hydroxy-2-oxo-4-phosphonooxybutanoate to phosphohydroxythreonine. The protein is Phosphoserine aminotransferase of Pseudomonas syringae pv. syringae (strain B728a).